A 360-amino-acid polypeptide reads, in one-letter code: Photosystem II protein D1 2 (360 aa).

3 consecutive transmembrane segments (helical) span residues 29–46 (YIGW…TAVT), 118–133 (HYMI…QWEY), and 142–156 (WICV…ATYS). Chlorophyll a is bound at residue His-118. Tyr-126 contributes to the pheophytin a binding site. [CaMn4O5] cluster is bound by residues Asp-170 and Glu-189. A helical transmembrane segment spans residues 197–218 (FHMFGVAGVLGGSLFAAMHGSL). Residue His-198 participates in chlorophyll a binding. Residues His-215 and 264-265 (SF) each bind a quinone. His-215 is a binding site for Fe cation. His-272 serves as a coordination point for Fe cation. Residues 274–288 (FLGAWPVVCIWLTAM) traverse the membrane as a helical segment. Residues His-332, Glu-333, Asp-342, and Ala-344 each coordinate [CaMn4O5] cluster. Positions 345 to 360 (AGESAPVALTAPVING) are excised as a propeptide.

It belongs to the reaction center PufL/M/PsbA/D family. PSII is composed of 1 copy each of membrane proteins PsbA, PsbB, PsbC, PsbD, PsbE, PsbF, PsbH, PsbI, PsbJ, PsbK, PsbL, PsbM, PsbT, PsbX, PsbY, PsbZ, Psb30/Ycf12, peripheral proteins PsbO, CyanoQ (PsbQ), PsbU, PsbV and a large number of cofactors. It forms dimeric complexes. The D1/D2 heterodimer binds P680, chlorophylls that are the primary electron donor of PSII, and subsequent electron acceptors. It shares a non-heme iron and each subunit binds pheophytin, quinone, additional chlorophylls, carotenoids and lipids. D1 provides most of the ligands for the Mn4-Ca-O5 cluster of the oxygen-evolving complex (OEC). There is also a Cl(-1) ion associated with D1 and D2, which is required for oxygen evolution. The PSII complex binds additional chlorophylls, carotenoids and specific lipids. is required as a cofactor. In terms of processing, tyr-161 forms a radical intermediate that is referred to as redox-active TyrZ, YZ or Y-Z. Post-translationally, C-terminally processed by CtpA; processing is essential to allow assembly of the oxygen-evolving complex and thus photosynthetic growth.

The protein resides in the cellular thylakoid membrane. It catalyses the reaction 2 a plastoquinone + 4 hnu + 2 H2O = 2 a plastoquinol + O2. Functionally, photosystem II (PSII) is a light-driven water:plastoquinone oxidoreductase that uses light energy to abstract electrons from H(2)O, generating O(2) and a proton gradient subsequently used for ATP formation. It consists of a core antenna complex that captures photons, and an electron transfer chain that converts photonic excitation into a charge separation. The D1/D2 (PsbA/PsbD) reaction center heterodimer binds P680, the primary electron donor of PSII as well as several subsequent electron acceptors. This is Photosystem II protein D1 2 from Acaryochloris marina (strain MBIC 11017).